A 168-amino-acid polypeptide reads, in one-letter code: Peptide deformylase (168 aa).

Cysteine 91 and histidine 133 together coordinate Fe cation. Glutamate 134 is a catalytic residue. Histidine 137 serves as a coordination point for Fe cation.

This sequence belongs to the polypeptide deformylase family. It depends on Fe(2+) as a cofactor.

The catalysed reaction is N-terminal N-formyl-L-methionyl-[peptide] + H2O = N-terminal L-methionyl-[peptide] + formate. Functionally, removes the formyl group from the N-terminal Met of newly synthesized proteins. Requires at least a dipeptide for an efficient rate of reaction. N-terminal L-methionine is a prerequisite for activity but the enzyme has broad specificity at other positions. The sequence is that of Peptide deformylase from Endomicrobium trichonymphae.